The chain runs to 283 residues: Polyprenyl-phosphate transporter (283 aa).

9 helical membrane passes run 27 to 47 (GTIA…SGIF), 51 to 71 (FWPS…AMGS), 85 to 105 (IPTM…LLKI), 112 to 132 (FTTK…VITL), 148 to 168 (TSLI…MLLP), 169 to 189 (GISG…MLAI), 197 to 217 (FAGL…FIIS), 230 to 250 (LMTF…VFPG), and 255 to 275 (IVMW…SLTL).

It belongs to the PopT family.

It is found in the cell membrane. Active in alkaline conditions. Flippase that catalyzes the transport of undecaprenyl phosphate (UndP) across the cytoplasmic membrane, from the external side to the cytoplasmic side. Is involved in UndP recycling during peptidoglycan synthesis. Necessary for peptidoglycan maintenance. In Staphylococcus aureus (strain NCTC 8325 / PS 47), this protein is Polyprenyl-phosphate transporter.